A 251-amino-acid polypeptide reads, in one-letter code: HTH-type transcriptional regulator UlaR (251 aa).

Residues 3-58 form the HTH deoR-type domain; sequence EAQRHQILLEMLAQLGFVTVEKVVERLGISPATARRDINKLDESGKLKKVRNGAEA. The segment at residues 20 to 39 is a DNA-binding region (H-T-H motif); sequence VTVEKVVERLGISPATARRD.

It localises to the cytoplasm. Its function is as follows. Represses ulaG and the ulaABCDEF operon. This chain is HTH-type transcriptional regulator UlaR, found in Escherichia coli O127:H6 (strain E2348/69 / EPEC).